The sequence spans 292 residues: Ephrin type-A receptor 4a (292 aa).

ATP-binding positions include 1-9 and Lys-27; that span reads IGIGEFGEV. The Protein kinase domain occupies 1–265; it reads IGIGEFGEVC…QIVNMLDKLI (265 aa). Asp-120 functions as the Proton acceptor in the catalytic mechanism. Position 153 is a phosphotyrosine; by autocatalysis (Tyr-153).

The protein belongs to the protein kinase superfamily. Tyr protein kinase family. Ephrin receptor subfamily. Widely expressed in the developing nervous system.

The protein resides in the cell membrane. It localises to the early endosome. The enzyme catalyses L-tyrosyl-[protein] + ATP = O-phospho-L-tyrosyl-[protein] + ADP + H(+). Functionally, receptor tyrosine kinase which binds membrane-bound ephrin family ligands residing on adjacent cells, leading to contact-dependent bidirectional signaling into neighboring cells. The signaling pathway downstream of the receptor is referred to as forward signaling while the signaling pathway downstream of the ephrin ligand is referred to as reverse signaling. Highly promiscuous, it has the unique property among Eph receptors to bind and to be physiologically activated by both GPI-anchored ephrin-A and transmembrane ephrin-B ligands including efna1 and efnb3. Upon activation by ephrin ligands, modulates cell morphology and integrin-dependent cell adhesion through regulation of the Rac, Rap and Rho GTPases activity. Plays an important role in the development of the nervous system controlling different steps of axonal guidance including the establishment of the corticospinal projections. In Danio rerio (Zebrafish), this protein is Ephrin type-A receptor 4a (epha4a).